The chain runs to 78 residues: Acyl carrier protein (78 aa).

In terms of domain architecture, Carrier spans 2-77 (SNIEDRVRKI…AAIDYVNSAS (76 aa)). Ser37 bears the O-(pantetheine 4'-phosphoryl)serine mark.

The protein belongs to the acyl carrier protein (ACP) family. 4'-phosphopantetheine is transferred from CoA to a specific serine of apo-ACP by AcpS. This modification is essential for activity because fatty acids are bound in thioester linkage to the sulfhydryl of the prosthetic group.

It is found in the cytoplasm. It functions in the pathway lipid metabolism; fatty acid biosynthesis. Functionally, carrier of the growing fatty acid chain in fatty acid biosynthesis. The sequence is that of Acyl carrier protein from Photobacterium profundum (strain SS9).